The following is a 426-amino-acid chain: MVQLDRFEILFNNPEQAYFAGQEISGKVIIENKEPKKVNEILLELKGRARTYWTKHSGKSRKHCSHSEPYFLEQFNPGYTHKFTVVKDGKEKERILPAGIHQVPFSYTLPKSLPSSFEGEFGHIRYTCKAICERPWDFDIVSRKAFTVVGIEDINSDPKLNEPATCVESNHAVTFCCRSAGSVTGEIRISKCGYTPGEKIDVSFKVINLSSKTRTTALRFVQQTTYKAKTFAGHEHIKNVVRVISKIDKGEVPGGSTTEWQEESITIPSLPPKLGKCKILSVTYSVELEVEQTLTVPCPIVIGSIPQLSQLLIHSKQSVQSAGNGSLPKSSIKDSPPKWDSESCVQVTITDESGQLVEELGNEMEALLSARKRVRMPSSILSELYPTMPSPYYKESFFGASDISEEKEQAQFGEASFAPKYPFYTD.

A compositionally biased stretch (polar residues) spans 320-329; the sequence is QSAGNGSLPK. Positions 320-340 are disordered; sequence QSAGNGSLPKSSIKDSPPKWD. Residues 331–340 are compositionally biased toward basic and acidic residues; that stretch reads SIKDSPPKWD.

The protein belongs to the arrestin family. In terms of assembly, interacts with tax-6. Phosphorylated. Dephosphorylated by tax-6 in vitro. As to expression, expressed from the comma stage to adulthood in the nervous system, including sensory neurons and interneurons posterior to the nerve ring, dorsal and ventral nerve cords, tail ganglia and, CEP, HSN, ASK, ADL, ASH and ASJ neurons.

Involved in several behavioral responses including chemotaxis towards lysine and adaptation to repeated osmotic stress. In addition, plays a role in resuming egg-laying and locomotion after starvation. This Caenorhabditis elegans protein is Arrestin domain-containing protein 17.